A 301-amino-acid chain; its full sequence is Acetyl-coenzyme A carboxylase carboxyl transferase subunit beta (301 aa).

A CoA carboxyltransferase N-terminal domain is found at 25 to 294 (LWIKDPSTGE…NSDAPAPQKP (270 aa)).

The protein belongs to the AccD/PCCB family. Acetyl-CoA carboxylase is a heterohexamer composed of biotin carboxyl carrier protein (AccB), biotin carboxylase (AccC) and two subunits each of ACCase subunit alpha (AccA) and ACCase subunit beta (AccD).

It is found in the cytoplasm. The catalysed reaction is N(6)-carboxybiotinyl-L-lysyl-[protein] + acetyl-CoA = N(6)-biotinyl-L-lysyl-[protein] + malonyl-CoA. It participates in lipid metabolism; malonyl-CoA biosynthesis; malonyl-CoA from acetyl-CoA: step 1/1. Component of the acetyl coenzyme A carboxylase (ACC) complex. Biotin carboxylase (BC) catalyzes the carboxylation of biotin on its carrier protein (BCCP) and then the CO(2) group is transferred by the transcarboxylase to acetyl-CoA to form malonyl-CoA. This is Acetyl-coenzyme A carboxylase carboxyl transferase subunit beta from Brucella canis (strain ATCC 23365 / NCTC 10854 / RM-666).